A 117-amino-acid chain; its full sequence is uncharacterized protein (117 aa).

To H.influenzae HI_1162 and to HI_0925.

This is an uncharacterized protein from Escherichia coli (strain K12).